The sequence spans 147 residues: Endoribonuclease YbeY (147 aa).

His109, His113, and His119 together coordinate Zn(2+).

The protein belongs to the endoribonuclease YbeY family. The cofactor is Zn(2+).

The protein localises to the cytoplasm. Its function is as follows. Single strand-specific metallo-endoribonuclease involved in late-stage 70S ribosome quality control and in maturation of the 3' terminus of the 16S rRNA. This chain is Endoribonuclease YbeY, found in Thiobacillus denitrificans (strain ATCC 25259 / T1).